The following is a 195-amino-acid chain: Peptidyl-tRNA hydrolase (195 aa).

Residue Y17 participates in tRNA binding. Catalysis depends on H22, which acts as the Proton acceptor. Positions 68, 70, and 116 each coordinate tRNA.

This sequence belongs to the PTH family. As to quaternary structure, monomer.

Its subcellular location is the cytoplasm. It catalyses the reaction an N-acyl-L-alpha-aminoacyl-tRNA + H2O = an N-acyl-L-amino acid + a tRNA + H(+). In terms of biological role, hydrolyzes ribosome-free peptidyl-tRNAs (with 1 or more amino acids incorporated), which drop off the ribosome during protein synthesis, or as a result of ribosome stalling. Catalyzes the release of premature peptidyl moieties from peptidyl-tRNA molecules trapped in stalled 50S ribosomal subunits, and thus maintains levels of free tRNAs and 50S ribosomes. This Shewanella baltica (strain OS155 / ATCC BAA-1091) protein is Peptidyl-tRNA hydrolase.